Here is a 561-residue protein sequence, read N- to C-terminus: Laccase-1 (561 aa).

An N-terminal signal peptide occupies residues 1–20 (MKNSFFSSLAKFASLSLAFA). Plastocyanin-like domains follow at residues 68-185 (VVQN…GPAT) and 191-337 (DLGM…YTGS). 3 N-linked (GlcNAc...) asparagine glycosylation sites follow: asparagine 71, asparagine 87, and asparagine 114. Cu cation-binding residues include histidine 119, histidine 121, histidine 163, and histidine 165. An intrachain disulfide couples cysteine 140 to cysteine 542. N-linked (GlcNAc...) asparagine glycans are attached at residues asparagine 226, asparagine 284, asparagine 327, asparagine 391, and asparagine 398. The Plastocyanin-like 3 domain maps to 396–525 (LLNWTDPTLL…ALQFVESESS (130 aa)). Residues histidine 445, histidine 448, histidine 450, histidine 504, cysteine 505, histidine 506, and histidine 510 each coordinate Cu cation.

This sequence belongs to the multicopper oxidase family. Requires Cu cation as cofactor.

Its subcellular location is the secreted. The enzyme catalyses 4 hydroquinone + O2 = 4 benzosemiquinone + 2 H2O. In terms of biological role, lignin degradation and detoxification of lignin-derived products. In Botryotinia fuckeliana (Noble rot fungus), this protein is Laccase-1 (lcc1).